The primary structure comprises 254 residues: tRNA (guanine-N(1)-)-methyltransferase (254 aa).

S-adenosyl-L-methionine-binding positions include G113 and I133–L138.

It belongs to the RNA methyltransferase TrmD family. In terms of assembly, homodimer.

It localises to the cytoplasm. It catalyses the reaction guanosine(37) in tRNA + S-adenosyl-L-methionine = N(1)-methylguanosine(37) in tRNA + S-adenosyl-L-homocysteine + H(+). In terms of biological role, specifically methylates guanosine-37 in various tRNAs. This Edwardsiella ictaluri (strain 93-146) protein is tRNA (guanine-N(1)-)-methyltransferase.